The chain runs to 159 residues: Endoribonuclease YbeY (159 aa).

H125, H129, and H135 together coordinate Zn(2+).

The protein belongs to the endoribonuclease YbeY family. It depends on Zn(2+) as a cofactor.

It is found in the cytoplasm. Its function is as follows. Single strand-specific metallo-endoribonuclease involved in late-stage 70S ribosome quality control and in maturation of the 3' terminus of the 16S rRNA. The sequence is that of Endoribonuclease YbeY from Thermoanaerobacter pseudethanolicus (strain ATCC 33223 / 39E) (Clostridium thermohydrosulfuricum).